We begin with the raw amino-acid sequence, 462 residues long: L-seryl-tRNA(Sec) selenium transferase (462 aa).

N6-(pyridoxal phosphate)lysine is present on K293.

This sequence belongs to the SelA family. It depends on pyridoxal 5'-phosphate as a cofactor.

The protein resides in the cytoplasm. The catalysed reaction is L-seryl-tRNA(Sec) + selenophosphate + H(+) = L-selenocysteinyl-tRNA(Sec) + phosphate. The protein operates within aminoacyl-tRNA biosynthesis; selenocysteinyl-tRNA(Sec) biosynthesis; selenocysteinyl-tRNA(Sec) from L-seryl-tRNA(Sec) (bacterial route): step 1/1. Its function is as follows. Converts seryl-tRNA(Sec) to selenocysteinyl-tRNA(Sec) required for selenoprotein biosynthesis. In Clostridium botulinum (strain Loch Maree / Type A3), this protein is L-seryl-tRNA(Sec) selenium transferase.